Consider the following 354-residue polypeptide: Sorbitol dehydrogenase (354 aa).

Zn(2+) is bound at residue C43. Position 49 (Y49) interacts with substrate. Zn(2+) contacts are provided by H67 and E68. A substrate-binding site is contributed by E153. Positions 181, 201, and 206 each coordinate NAD(+). S208 and S222 each carry phosphoserine. Residues 270–272 and 294–296 each bind NAD(+); these read VGL and VFR. Substrate-binding residues include R296 and Y297.

It belongs to the zinc-containing alcohol dehydrogenase family. As to quaternary structure, homotetramer. Requires Zn(2+) as cofactor. Expressed in liver.

The protein localises to the mitochondrion membrane. The protein resides in the cell projection. It localises to the cilium. It is found in the flagellum. It carries out the reaction xylitol + NAD(+) = D-xylulose + NADH + H(+). The catalysed reaction is L-iditol + NAD(+) = keto-L-sorbose + NADH + H(+). The enzyme catalyses keto-D-fructose + NADH + H(+) = D-sorbitol + NAD(+). Its function is as follows. Polyol dehydrogenase that catalyzes the reversible NAD(+)-dependent oxidation of various sugar alcohols. Is mostly active with xylitol, L-iditol and D-sorbitol (D-glucitol) as substrates, leading to the C2-oxidized products D-xylulose, L-sorbose and D-fructose, respectively. Is a key enzyme in the polyol pathway that interconverts glucose and fructose via sorbitol, which constitutes an important alternate route for glucose metabolism. May play a role in sperm motility by using sorbitol as an alternative energy source for sperm motility. The chain is Sorbitol dehydrogenase (SORD) from Ovis aries (Sheep).